A 200-amino-acid chain; its full sequence is Glycerol-3-phosphate acyltransferase (200 aa).

5 helical membrane passes run 1-21, 53-73, 81-101, 114-134, and 139-159; these read MLLS…MPNG, GPAL…VLLA, WVQV…VWLG, MFLG…MAVI, and IVSL…LTSG.

It belongs to the PlsY family. As to quaternary structure, probably interacts with PlsX.

The protein localises to the cell inner membrane. It carries out the reaction an acyl phosphate + sn-glycerol 3-phosphate = a 1-acyl-sn-glycero-3-phosphate + phosphate. It participates in lipid metabolism; phospholipid metabolism. In terms of biological role, catalyzes the transfer of an acyl group from acyl-phosphate (acyl-PO(4)) to glycerol-3-phosphate (G3P) to form lysophosphatidic acid (LPA). This enzyme utilizes acyl-phosphate as fatty acyl donor, but not acyl-CoA or acyl-ACP. This chain is Glycerol-3-phosphate acyltransferase, found in Synechococcus sp. (strain CC9902).